The following is a 159-amino-acid chain: 17 kDa surface antigen (159 aa).

A signal peptide spans 1-19 (MKLLSKIMIIALATSMLQA). Cys-20 carries N-palmitoyl cysteine lipidation. Residue Cys-20 is the site of S-diacylglycerol cysteine attachment.

The protein belongs to the rickettsiale 17 kDa surface antigen family.

It localises to the cell outer membrane. The polypeptide is 17 kDa surface antigen (omp) (Rickettsia japonica (strain ATCC VR-1363 / YH)).